Consider the following 222-residue polypeptide: Ribose-5-phosphate isomerase A (222 aa).

Substrate contacts are provided by residues 28-31, 81-84, and 94-97; these read TGST, DGAD, and KGGG. The Proton acceptor role is filled by glutamate 103. Lysine 121 contacts substrate.

The protein belongs to the ribose 5-phosphate isomerase family. As to quaternary structure, homodimer.

The catalysed reaction is aldehydo-D-ribose 5-phosphate = D-ribulose 5-phosphate. Its pathway is carbohydrate degradation; pentose phosphate pathway; D-ribose 5-phosphate from D-ribulose 5-phosphate (non-oxidative stage): step 1/1. Its function is as follows. Catalyzes the reversible conversion of ribose-5-phosphate to ribulose 5-phosphate. The polypeptide is Ribose-5-phosphate isomerase A (Azoarcus sp. (strain BH72)).